Here is a 106-residue protein sequence, read N- to C-terminus: MKRNINLFKCGGDKMYVVVVYDISLDEKGSRNWRKIFGICKRYLHHIQNSVFEGELSEVDIQRLKYEVSKYIRDDLDSFIIFKSRNERWMEKEMLGLQEDKTDNFL.

Asp-22 serves as a coordination point for Mg(2+).

This sequence belongs to the CRISPR-associated endoribonuclease Cas2 protein family. As to quaternary structure, homodimer, forms a heterotetramer with a Cas1 homodimer. It depends on Mg(2+) as a cofactor.

In terms of biological role, CRISPR (clustered regularly interspaced short palindromic repeat), is an adaptive immune system that provides protection against mobile genetic elements (viruses, transposable elements and conjugative plasmids). CRISPR clusters contain sequences complementary to antecedent mobile elements and target invading nucleic acids. CRISPR clusters are transcribed and processed into CRISPR RNA (crRNA). Functions as a ssRNA-specific endoribonuclease. Involved in the integration of spacer DNA into the CRISPR cassette. The sequence is that of CRISPR-associated endoribonuclease Cas2 from Fusobacterium nucleatum subsp. nucleatum (strain ATCC 25586 / DSM 15643 / BCRC 10681 / CIP 101130 / JCM 8532 / KCTC 2640 / LMG 13131 / VPI 4355).